The following is a 573-amino-acid chain: Ribosomal RNA-processing protein 9 (573 aa).

Residues 1 to 63 (MSDVTQQKKR…FEGENPADKR (63 aa)) form a disordered region. Serine 2 bears the N-acetylserine mark. The span at 25–58 (DEEITDPSSNEDEQLEVSDEEDALESEEEFEGEN) shows a compositional bias: acidic residues. Positions 32–106 (SSNEDEQLEV…KERTIDEYNN (75 aa)) form a coiled coil. Residue serine 50 is modified to Phosphoserine. WD repeat units lie at residues 234–273 (GHYD…PVKV), 278–317 (DRRG…QLEI), 320–359 (GHHD…RLTF), 397–435 (FCEG…PIFT), 471–509 (QPFW…RSFE), and 516–562 (GAKG…ARNG).

Belongs to the WD repeat RRP9 family. As to quaternary structure, interacts with UTP25. Component of the ribosomal small subunit (SSU) processome composed of at least 40 protein subunits and snoRNA U3.

It localises to the nucleus. It is found in the nucleolus. In terms of biological role, involved in nucleolar processing of pre-18S ribosomal RNA. Required for efficient pre-rRNA cleavage at sites A0, A1 and A2, and biosynthesis of 18S rRNA. The protein is Ribosomal RNA-processing protein 9 (RRP9) of Saccharomyces cerevisiae (strain ATCC 204508 / S288c) (Baker's yeast).